We begin with the raw amino-acid sequence, 459 residues long: Ribulose bisphosphate carboxylase (459 aa).

Substrate is bound at residue N111. The active-site Proton acceptor is the K166. Substrate is bound at residue K168. Residues K191, D193, and E194 each contribute to the Mg(2+) site. Residue K191 is modified to N6-carboxylysine. The active-site Proton acceptor is H287. The substrate site is built by R288, H321, and S368.

The protein belongs to the RuBisCO large chain family. Type II subfamily. In terms of assembly, homodimer. The cofactor is Mg(2+).

The enzyme catalyses 2 (2R)-3-phosphoglycerate + 2 H(+) = D-ribulose 1,5-bisphosphate + CO2 + H2O. It catalyses the reaction D-ribulose 1,5-bisphosphate + O2 = 2-phosphoglycolate + (2R)-3-phosphoglycerate + 2 H(+). In terms of biological role, ruBisCO catalyzes two reactions: the carboxylation of D-ribulose 1,5-bisphosphate, the primary event in carbon dioxide fixation, as well as the oxidative fragmentation of the pentose substrate. Both reactions occur simultaneously and in competition at the same active site. The chain is Ribulose bisphosphate carboxylase from Paramagnetospirillum magnetotacticum (Aquaspirillum magnetotacticum).